The sequence spans 219 residues: Ion-translocating oxidoreductase complex subunit G (219 aa).

A helical membrane pass occupies residues 25–45; that stretch reads GLLLGLFSLVSALMLALASDA. Position 187 is an FMN phosphoryl threonine (T187).

Belongs to the RnfG family. As to quaternary structure, the complex is composed of six subunits: RnfA, RnfB, RnfC, RnfD, RnfE and RnfG. Requires FMN as cofactor.

It is found in the cellular chromatophore membrane. Functionally, part of a membrane-bound complex that couples electron transfer with translocation of ions across the membrane. The protein is Ion-translocating oxidoreductase complex subunit G of Cereibacter sphaeroides (strain ATCC 17029 / ATH 2.4.9) (Rhodobacter sphaeroides).